A 214-amino-acid chain; its full sequence is NAD(P)H-quinone oxidoreductase subunit 5, chloroplastic (214 aa).

The next 2 membrane-spanning stretches (helical) occupy residues 84–104 (LFPLLILLLFTFFIGFIGIPF) and 152–172 (SLAILGLFIAYIFYGSAYSFF).

Belongs to the complex I subunit 5 family. As to quaternary structure, NDH is composed of at least 16 different subunits, 5 of which are encoded in the nucleus.

The protein resides in the plastid. The protein localises to the chloroplast thylakoid membrane. The enzyme catalyses a plastoquinone + NADH + (n+1) H(+)(in) = a plastoquinol + NAD(+) + n H(+)(out). It carries out the reaction a plastoquinone + NADPH + (n+1) H(+)(in) = a plastoquinol + NADP(+) + n H(+)(out). In terms of biological role, NDH shuttles electrons from NAD(P)H:plastoquinone, via FMN and iron-sulfur (Fe-S) centers, to quinones in the photosynthetic chain and possibly in a chloroplast respiratory chain. The immediate electron acceptor for the enzyme in this species is believed to be plastoquinone. Couples the redox reaction to proton translocation, and thus conserves the redox energy in a proton gradient. The protein is NAD(P)H-quinone oxidoreductase subunit 5, chloroplastic (ndhF) of Brachypodium sylvaticum (False brome).